Reading from the N-terminus, the 475-residue chain is Ribulose bisphosphate carboxylase large chain (475 aa).

A propeptide spanning residues 1 to 2 (MS) is cleaved from the precursor. Position 3 is an N-acetylproline (Pro-3). Lys-14 carries the post-translational modification N6,N6,N6-trimethyllysine. 2 residues coordinate substrate: Asn-123 and Thr-173. The Proton acceptor role is filled by Lys-175. Substrate is bound at residue Lys-177. The Mg(2+) site is built by Lys-201, Asp-203, and Glu-204. An N6-carboxylysine modification is found at Lys-201. The active-site Proton acceptor is the His-294. Residues Arg-295, His-327, and Ser-379 each contribute to the substrate site.

This sequence belongs to the RuBisCO large chain family. Type I subfamily. Heterohexadecamer of 8 large chains and 8 small chains; disulfide-linked. The disulfide link is formed within the large subunit homodimers. Mg(2+) serves as cofactor. The disulfide bond which can form in the large chain dimeric partners within the hexadecamer appears to be associated with oxidative stress and protein turnover.

Its subcellular location is the plastid. The protein localises to the chloroplast. The enzyme catalyses 2 (2R)-3-phosphoglycerate + 2 H(+) = D-ribulose 1,5-bisphosphate + CO2 + H2O. It catalyses the reaction D-ribulose 1,5-bisphosphate + O2 = 2-phosphoglycolate + (2R)-3-phosphoglycerate + 2 H(+). Its function is as follows. RuBisCO catalyzes two reactions: the carboxylation of D-ribulose 1,5-bisphosphate, the primary event in carbon dioxide fixation, as well as the oxidative fragmentation of the pentose substrate in the photorespiration process. Both reactions occur simultaneously and in competition at the same active site. The protein is Ribulose bisphosphate carboxylase large chain of Carica papaya (Papaya).